Reading from the N-terminus, the 147-residue chain is Nucleoside diphosphate kinase (147 aa).

ATP is bound by residues Lys-9, Phe-57, Arg-85, Thr-91, Arg-102, and Asn-112. His-115 serves as the catalytic Pros-phosphohistidine intermediate.

This sequence belongs to the NDK family. Homotetramer. Mg(2+) is required as a cofactor.

The protein resides in the cytoplasm. The enzyme catalyses a 2'-deoxyribonucleoside 5'-diphosphate + ATP = a 2'-deoxyribonucleoside 5'-triphosphate + ADP. The catalysed reaction is a ribonucleoside 5'-diphosphate + ATP = a ribonucleoside 5'-triphosphate + ADP. Major role in the synthesis of nucleoside triphosphates other than ATP. The ATP gamma phosphate is transferred to the NDP beta phosphate via a ping-pong mechanism, using a phosphorylated active-site intermediate. The chain is Nucleoside diphosphate kinase from Listeria monocytogenes serotype 4b (strain F2365).